Consider the following 184-residue polypeptide: Ribosome-recycling factor (184 aa).

The protein belongs to the RRF family.

The protein localises to the cytoplasm. Functionally, responsible for the release of ribosomes from messenger RNA at the termination of protein biosynthesis. May increase the efficiency of translation by recycling ribosomes from one round of translation to another. This chain is Ribosome-recycling factor, found in Clostridium botulinum (strain Loch Maree / Type A3).